The sequence spans 149 residues: Small heat shock protein IbpB (149 aa).

A sHSP domain is found at 26 to 137 (SQEPIDFPPY…QPQRIAIGGG (112 aa)).

The protein belongs to the small heat shock protein (HSP20) family. Homodimer. Forms homomultimers of about 100-150 subunits at optimal growth temperatures. Conformation changes to oligomers at high temperatures or high ionic concentrations. The decrease in size of the multimers is accompanied by an increase in chaperone activity.

The protein resides in the cytoplasm. Associates with aggregated proteins, together with IbpA, to stabilize and protect them from irreversible denaturation and extensive proteolysis during heat shock and oxidative stress. Aggregated proteins bound to the IbpAB complex are more efficiently refolded and reactivated by the ATP-dependent chaperone systems ClpB and DnaK/DnaJ/GrpE. Its activity is ATP-independent. The protein is Small heat shock protein IbpB of Pectobacterium carotovorum subsp. carotovorum (strain PC1).